The primary structure comprises 147 residues: MASHRLLLLCLAGLVFVSEAGPTGVDESKCPLMVKVLDAVRGSPAVNVAVNVFKKAADETWAPFASGKTSESGELHGLTTEEEFVEGIYKVEIDTKSYWKSLGISPFHEHAEVVFTANDSGPRHYTIAALLSPYSYSTTAVVTNPKE.

An N-terminal signal peptide occupies residues 1 to 20 (MASHRLLLLCLAGLVFVSEA). A Sulfocysteine modification is found at Cys-30. Residue Lys-35 coordinates L-thyroxine. Ser-72 is subject to Phosphoserine. L-thyroxine is bound at residue Glu-74. Residue Asn-118 is glycosylated (N-linked (GlcNAc...) asparagine). Position 137 (Ser-137) interacts with L-thyroxine.

This sequence belongs to the transthyretin family. Homotetramer. Dimer of dimers. In the homotetramer, subunits assemble around a central channel that can accommodate two ligand molecules. Interacts with RBP4. In terms of processing, sulfonation of the reactive cysteine Cys-30 enhances the stability of the native conformation of TTR, avoiding misassembly of the protein leading to amyloid formation.

It localises to the secreted. In terms of biological role, thyroid hormone-binding protein. Probably transports thyroxine from the bloodstream to the brain. The sequence is that of Transthyretin (TTR) from Macaca fascicularis (Crab-eating macaque).